The chain runs to 91 residues: Small ribosomal subunit protein bS6 (91 aa).

It belongs to the bacterial ribosomal protein bS6 family.

Its function is as follows. Binds together with bS18 to 16S ribosomal RNA. This Leptospira biflexa serovar Patoc (strain Patoc 1 / Ames) protein is Small ribosomal subunit protein bS6.